We begin with the raw amino-acid sequence, 439 residues long: Taxadien-5-alpha-ol O-acetyltransferase (439 aa).

Residues His164 and Asp373 each act as proton acceptor in the active site.

The protein belongs to the plant acyltransferase family.

It catalyses the reaction taxa-4(20),11-dien-5alpha-ol + acetyl-CoA = taxa-4(20),11-dien-5alpha-yl acetate + CoA. The protein operates within alkaloid biosynthesis; taxol biosynthesis; 10-deacetyl-2-debenzoylbaccatin III from taxa-4(20),11-dien-5alpha-ol: step 1/3. This is Taxadien-5-alpha-ol O-acetyltransferase from Taxus chinensis (Chinese yew).